Reading from the N-terminus, the 707-residue chain is Glucose starvation modulator protein 1 (707 aa).

Residues 20–48 (CTFCHQKHLQCSNERPCKNCVKRNIADQC) constitute a DNA-binding region (zn(2)-C6 fungal-type). 4 disordered regions span residues 63–122 (NSKA…PNDL), 154–188 (QPTHTVASETSSSYSQVQPQHHPESSVPPSAPPES), 260–283 (DQQQSSSEATGTSASKAVPMGPSH), and 385–404 (NVSSRGNNNTSNQKLQSAIA). 2 stretches are compositionally biased toward low complexity: residues 66-79 (AVAAATTPEATTTT) and 91-104 (SPSISFPSSSISPI). 2 stretches are compositionally biased toward polar residues: residues 105–114 (NTSTFDTNGH) and 154–172 (QPTHTVASETSSSYSQVQP). The segment covering 178 to 188 (SSVPPSAPPES) has biased composition (low complexity). Polar residues predominate over residues 260–274 (DQQQSSSEATGTSAS). Residues 522 to 591 (DYEKLSQLNS…FQLFKSVAVG (70 aa)) form the PAS domain. Over residues 621–652 (NYNNNYNHNYSHNNNNNNNSNNSNNNGMSTGA) the composition is skewed to low complexity. Positions 621-659 (NYNNNYNHNYSHNNNNNNNSNNSNNNGMSTGAGNSGDGD) are disordered.

Belongs to the ERT1/acuK family.

The protein resides in the nucleus. In terms of biological role, transcription factor which regulates nonfermentable carbon utilization. This is Glucose starvation modulator protein 1 (GSM1) from Lodderomyces elongisporus (strain ATCC 11503 / CBS 2605 / JCM 1781 / NBRC 1676 / NRRL YB-4239) (Yeast).